The primary structure comprises 565 residues: Formate--tetrahydrofolate ligase (565 aa).

Position 67–74 (67–74 (TPLGEGKT)) interacts with ATP.

It belongs to the formate--tetrahydrofolate ligase family.

It carries out the reaction (6S)-5,6,7,8-tetrahydrofolate + formate + ATP = (6R)-10-formyltetrahydrofolate + ADP + phosphate. It functions in the pathway one-carbon metabolism; tetrahydrofolate interconversion. This chain is Formate--tetrahydrofolate ligase, found in Saccharopolyspora erythraea (strain ATCC 11635 / DSM 40517 / JCM 4748 / NBRC 13426 / NCIMB 8594 / NRRL 2338).